Consider the following 514-residue polypeptide: Peptide chain release factor 3 (514 aa).

Residues 8–268 form the tr-type G domain; that stretch reads KKRRTFAIIS…TFLKFAPEPH (261 aa). Residues 17-24, 85-89, and 139-142 contribute to the GTP site; these read SHPDAGKT, DTPGH, and NKLD.

The protein belongs to the TRAFAC class translation factor GTPase superfamily. Classic translation factor GTPase family. PrfC subfamily.

The protein resides in the cytoplasm. Its function is as follows. Increases the formation of ribosomal termination complexes and stimulates activities of RF-1 and RF-2. It binds guanine nucleotides and has strong preference for UGA stop codons. It may interact directly with the ribosome. The stimulation of RF-1 and RF-2 is significantly reduced by GTP and GDP, but not by GMP. The chain is Peptide chain release factor 3 from Streptococcus pneumoniae (strain Hungary19A-6).